Consider the following 459-residue polypeptide: GTPase Der (459 aa).

EngA-type G domains lie at 3-169 (PLVA…PPKE) and 183-358 (IRLA…DQFR). Residues 9 to 16 (GRPNVGKS), 56 to 60 (DTGGF), 119 to 122 (NKLD), 189 to 196 (GRPNVGKS), 236 to 240 (DTAGI), and 301 to 304 (NKWD) contribute to the GTP site. In terms of domain architecture, KH-like spans 359–442 (FRAPTPQLNR…PIRLIFKGRP (84 aa)).

It belongs to the TRAFAC class TrmE-Era-EngA-EngB-Septin-like GTPase superfamily. EngA (Der) GTPase family. As to quaternary structure, associates with the 50S ribosomal subunit.

Functionally, GTPase that plays an essential role in the late steps of ribosome biogenesis. This Myxococcus xanthus (strain DK1622) protein is GTPase Der.